Consider the following 257-residue polypeptide: Zinc transporter ZupT (257 aa).

The next 8 membrane-spanning stretches (helical) occupy residues 5 to 25, 32 to 52, 61 to 81, 109 to 129, 137 to 157, 171 to 191, 195 to 215, and 236 to 256; these read LILTLLAGAATFIGAFLGVLG, VLAFSLGFAAGIMLLISLMEM, GMSPVLGYGMFIIGLLGYFGL, AILLTLGISLHNFPEGIATFV, LGFGIALAVALHNIPEGLAVA, IFWAGISGMAEILGGVLAWLI, LVSPIVMAAIMAAVAGIMVAL, and GVLCGMSIMGLSLVILQTIGI. Asn120 and Glu123 together coordinate Fe(2+). Zn(2+) contacts are provided by Glu123 and His148. Asn149, Glu152, and Glu181 together coordinate Fe(2+). Glu152 contributes to the Zn(2+) binding site.

It belongs to the ZIP transporter (TC 2.A.5) family. ZupT subfamily.

It is found in the cell inner membrane. It carries out the reaction Zn(2+)(in) = Zn(2+)(out). In terms of biological role, mediates zinc uptake. May also transport other divalent cations. The protein is Zinc transporter ZupT of Salmonella agona (strain SL483).